A 501-amino-acid chain; its full sequence is Zinc-binding lipoprotein AdcA (501 aa).

The first 18 residues, 1-18, serve as a signal peptide directing secretion; the sequence is MKKISLLLASLCALFLVA. Cysteine 19 carries N-palmitoyl cysteine lipidation. Cysteine 19 carries the S-diacylglycerol cysteine lipid modification. Histidine 63 lines the Zn(2+) pocket. The interval 116–136 is disordered; sequence LPGGEEEEGDHDHGEEGHHHE. Residues 120 to 136 form a his-rich loop region; sequence EEEEGDHDHGEEGHHHE. Residues 125-136 are compositionally biased toward basic and acidic residues; it reads DHDHGEEGHHHE. Residues histidine 140, histidine 204, and glutamate 279 each coordinate Zn(2+).

Belongs to the bacterial solute-binding protein 9 family.

Its subcellular location is the cell membrane. Functionally, part of the ATP-binding cassette (ABC) transport system AdcABC involved in zinc import. Binds zinc with high affinity and specificity and delivers it to the membrane permease for translocation into the cytoplasm. The sequence is that of Zinc-binding lipoprotein AdcA (adcA) from Streptococcus pneumoniae serotype 4 (strain ATCC BAA-334 / TIGR4).